A 729-amino-acid polypeptide reads, in one-letter code: Transient receptor potential cation channel subfamily V member 5 (729 aa).

Residues 1–327 (MGGFLPKAEG…SFKWNKYGRP (327 aa)) lie on the Cytoplasmic side of the membrane. ANK repeat units follow at residues 44 to 74 (ILES…DVRQ), 78 to 107 (LGET…ELVF), 116 to 145 (AGQT…SVSA), 162 to 191 (FGEH…DIRA), 195 to 228 (LGNT…HGDH), and 239 to 268 (QGLT…HIQW). A helical membrane pass occupies residues 328–348 (YFCILAALYLLYMICFTTCCV). Residues 349-385 (YRPLKFRGGNRTHSRDITILQQKLLQEAYETREDIIR) lie on the Extracellular side of the membrane. Asn-358 carries N-linked (GlcNAc...) asparagine glycosylation. A helical membrane pass occupies residues 386 to 408 (LVGELVSIVGAVIILLLEIPDIF). Residues 409 to 419 (RVGASRYFGKT) are Cytoplasmic-facing. The helical transmembrane segment at 420-442 (ILGGPFHVIIITYASLVLVTMVM) threads the bilayer. At 443-448 (RLTNTN) the chain is on the extracellular side. A helical membrane pass occupies residues 449–469 (GEVVPMSFALVLGWCSVMYFT). At 470 to 492 (RGFQMLGPFTIMIQKMIFGDLMR) the chain is on the cytoplasmic side. A helical membrane pass occupies residues 493-513 (FCWLMAVVILGFASAFYIIFQ). Positions 524–544 (YDYPMALFTTFELFLTVIDAP) form an intramembrane region, pore-forming. Asp-542 provides a ligand contact to Ca(2+). The helical transmembrane segment at 557-577 (IVNFAFTIIATLLMLNLFIAM) threads the bilayer. Residues 578–729 (MGDTHWRVAQ…EGDGEEVYHF (152 aa)) are Cytoplasmic-facing. The interval 598–602 (VATTV) is interaction with S100A10. Residues 650-653 (VFKN) form an involved in Ca(2+)-dependent inactivation region. Basic and acidic residues predominate over residues 654-665 (SDKEDDQEHPSE). Positions 654-675 (SDKEDDQEHPSEKQPSGAESGT) are disordered. Thr-685 carries the post-translational modification Phosphothreonine. Ser-689 carries the phosphoserine modification. Residues 700 to 729 (GWEILRQNTLGHLNLGLNLSEGDGEEVYHF) are involved in Ca(2+)-dependent inactivation.

Belongs to the transient receptor (TC 1.A.4) family. TrpV subfamily. TRPV5 sub-subfamily. As to quaternary structure, homotetramer and probably heterotetramer with TRPV6. Interacts with TRPV6. Interacts with S100A10 and probably with the ANAX2-S100A10 heterotetramer. The interaction with S100A10 is required for the trafficking to the plasma membrane. Interacts with calmodulin. Interacts with BSPRY, which results in its inactivation. Glycosylated. Expressed at high levels in kidney, small intestine and pancreas, and at lower levels in testis, prostate, placenta, brain, colon and rectum.

It localises to the apical cell membrane. The catalysed reaction is Ca(2+)(in) = Ca(2+)(out). With respect to regulation, activated by WNK3. Its function is as follows. Constitutively active calcium selective cation channel thought to be involved in Ca(2+) reabsorption in kidney and intestine. Required for normal Ca(2+) reabsorption in the kidney distal convoluted tubules. The channel is activated by low internal calcium level and the current exhibits an inward rectification. A Ca(2+)-dependent feedback regulation includes fast channel inactivation and slow current decay. Heteromeric assembly with TRPV6 seems to modify channel properties. TRPV5-TRPV6 heteromultimeric concatemers exhibit voltage-dependent gating. The sequence is that of Transient receptor potential cation channel subfamily V member 5 (TRPV5) from Homo sapiens (Human).